Here is a 106-residue protein sequence, read N- to C-terminus: Protein translation factor SUI1 homolog (106 aa).

The protein belongs to the SUI1 family.

Additional factor that functions in concert with eIF-2 and the initiator tRNA in directing the ribosome to the proper start site of translation. The chain is Protein translation factor SUI1 homolog from Acanthamoeba polyphaga mimivirus (APMV).